The following is a 144-amino-acid chain: Effector EagT6 (144 aa).

As to quaternary structure, homodimer. Two dimers interact with Tse6; this interaction is crucial for Tse6 loading onto VgrG1a.

In terms of biological role, plays an essential role in toxin Tse6 delivery to target cells and specifically in the loading of Tse6 onto VgrG1a. This is Effector EagT6 from Pseudomonas aeruginosa (strain ATCC 15692 / DSM 22644 / CIP 104116 / JCM 14847 / LMG 12228 / 1C / PRS 101 / PAO1).